The chain runs to 282 residues: Extent of cell elongation protein 1 (282 aa).

The signal sequence occupies residues 1–18 (MKFSKVASFAFLALSSQA). Residues 68–92 (ISFAGIVSSIINQLPSIIQIIGNII) form a helical membrane-spanning segment.

Its subcellular location is the secreted. The protein resides in the host cell membrane. Its function is as follows. Secreted protein cleaved by KEX2 in 8 similar peptides (ECE1-I to ECE1-VIII). Stimulates biofilm formation. In terms of biological role, acts as a cytolytic peptide toxin that directly damages host epithelial membranes, triggers a danger response signaling pathway and activates epithelial immunity. Probably acts similarly to cationic antimicrobial peptide toxins, inducing lesions after binding to target cell membranes and causing an inward current associated with calcium influx. This Candida tropicalis (strain ATCC MYA-3404 / T1) (Yeast) protein is Extent of cell elongation protein 1.